The primary structure comprises 522 residues: Monogalactosyldiacylglycerol synthase, chloroplastic (522 aa).

A chloroplast-targeting transit peptide spans 1 to 98; sequence MSHPSTVTSE…RIPLGFSSIG (98 aa).

This sequence belongs to the glycosyltransferase 28 family. Homodimer. Zn(2+) serves as cofactor.

It is found in the plastid. The protein localises to the chloroplast inner membrane. It carries out the reaction a 1,2-diacyl-sn-glycerol + UDP-alpha-D-galactose = a 1,2-diacyl-3-O-(beta-D-galactosyl)-sn-glycerol + UDP + H(+). With respect to regulation, inhibited by ortho-phenanthroline and UDP (competitive inhibitor relatively to UDP-Gal only) and inactivated by citraconic anhydride, tert-butoxycarbonyl-L-methionine hydrosuccinimidyl ester (SLR) and N-ethylmaleimide (NEM). In terms of biological role, involved in the synthesis of the major structural component of photosynthetic membranes. The 1,2-diacylglycerol substrate preference is 18:2/18:2 &gt; 18:0/18:1 &gt; 18:1/18:1 &gt; 18:1/16:0 &gt; 16:0/18:2 &gt; 18:3/18:3 &gt; 16:0/18:1 &gt; 16:0/16:0 &gt; 18:0/18:0. In Spinacia oleracea (Spinach), this protein is Monogalactosyldiacylglycerol synthase, chloroplastic (MGD A).